Here is a 1205-residue protein sequence, read N- to C-terminus: U2 snRNP component prp10 (1205 aa).

Disordered regions lie at residues 39-58, 122-175, and 202-254; these read QKEA…EGTQ, YADE…GRSY, and GTLK…RRSR. Residues 44-58 are compositionally biased toward polar residues; sequence KNSSTNGSVNIEGTQ. Residues 130–153 are compositionally biased toward basic and acidic residues; that stretch reads MQERQSKKQIQDRESDYQKQRYDR. HEAT repeat units lie at residues 393–429, 431–473, 475–505, 506–540, 541–578, 582–619, 665–702, 745–782, 828–865, 912–949, 954–991, 993–1024, 1025–1061, 1065–1102, 1107–1142, and 1143–1179; these read LRER…DFGA, ALFN…PFTH, ILVV…AKAS, GLAH…ASAL, GVPA…LLGC, PHLK…AATP, HFTR…TDGV, VGSR…SLGV, PYLP…VLKA, PPIR…RGSE, REWM…AIGP, DVLA…AETC, MPFT…YIGE, DYVY…GCVG, DAMI…RNCI, and GVGP…QSAD.

This sequence belongs to the SF3B1 family. In terms of assembly, belongs to the 40S cdc5-associated complex (or cwf complex), a spliceosome sub-complex reminiscent of a late-stage spliceosome composed of the U2, U5 and U6 snRNAs and at least brr2, cdc5, cwf2/prp3, cwf3/syf1, cwf4/syf3, cwf5/ecm2, spp42/cwf6, cwf7/spf27, cwf8, cwf9, cwf10, cwf11, cwf12, prp45/cwf13, cwf14, cwf15, cwf16, cwf17, cwf18, cwf19, cwf20, cwf21, cwf22, cwf23, cwf24, cwf25, cwf26, cyp7/cwf27, cwf28, cwf29/ist3, lea1, msl1, prp5/cwf1, prp10, prp12/sap130, prp17, prp22, sap61, sap62, sap114, sap145, slu7, smb1, smd1, smd3, smf1, smg1 and syf2.

Its subcellular location is the nucleus. In terms of biological role, contacts pre-mRNA on both sides of the branch site early in spliceosome assembly. This is U2 snRNP component prp10 (prp10) from Schizosaccharomyces pombe (strain 972 / ATCC 24843) (Fission yeast).